The primary structure comprises 373 residues: Caspase-4 (373 aa).

A required for LPS-binding region spans residues 1-59; it reads MAENKHPDKPLKVLEQLGKEVLTEYLEKLVQSNVLKLKEEDKQKFNNAERSDKRWVFVD. Positions 1–80 are excised as a propeptide; sequence MAENKHPDKP…MLLQTFFSVD (80 aa). One can recognise a CARD domain in the interval 1–91; it reads MAENKHPDKP…GSHHGEANLE (91 aa). Residue Ser-83 is modified to Phosphoserine. Catalysis depends on residues His-206 and Cys-254. Residues 267–285 constitute a propeptide that is removed on maturation; sequence SSKPQLCRGVDLPRNMEAD. Position 310 is a (Microbial infection) ADP-riboxanated arginine (Arg-310).

Belongs to the peptidase C14A family. In terms of assembly, heterotetramer that consists of two anti-parallel arranged heterodimers, each one formed by a 20 kDa (Caspase-4 subunit p20) and a 10 kDa (Caspase-4 subunit p10) subunit. Upon direct LPS-binding, forms large homooligomers, resulting in its activation. These oligomers are often referred to as 'non-canonical inflammasomes'. In its precursor form, interacts with TMEM214; this interaction is required for association with the endoplasmic reticulum membrane. Interacts with CASP1. Interacts with NOD2. Interacts with Serpinb1a, Serpinb1b and Serpinb1c; these interactions regulate CASP4 activity. Heterotetramer that consists of two anti-parallel arranged heterodimers, each one formed by a 20 kDa (Caspase-4 subunit p20) and a 10 kDa (Caspase-4 subunit p10) subunit. In terms of processing, in response to activation signals, undergoes autoproteolytic cleavage and activation. Post-translationally, (Microbial infection) ADP-riboxanation by S.flexneri OspC3 blocks CASP4 autoprocessing, preventing CASP4 activation and ability to recognize and cleave GSDMD, thereby thwarting the inflammasome/pyroptosis-mediated defense. As to expression, widely expressed, including in thymus, lung and spleen (at protein level). Very low levels, if any, in the brain.

Its subcellular location is the cytoplasm. It is found in the cytosol. The protein resides in the endoplasmic reticulum membrane. It localises to the mitochondrion. The protein localises to the inflammasome. Its subcellular location is the secreted. It carries out the reaction Strict requirement for Asp at the P1 position and has a preferred cleavage sequence of (Ile/Leu/Val/Phe)-Gly-His-Asp-|-.. Its activity is regulated as follows. Activated by homooligomerization induced by direct binding to cytosolic LPS, in a TLR4-independent manner. In addition to LPS, CASP4/CASP11 may also be activated by oxidized phospholipid 1-palmitoyl-2-arachidonoyl- sn-glycero-3-phosphorylcholine, an oxidized phospholipid (oxPAPC), in dendritic cells, promoting adaptive immunity. The role of oxPAPC is however unclear and another report suggests that oxPAPC competes with LPS-binding and inhibits the non-canonical inflammasome in macrophages. Inflammatory caspase that acts as the effector of the non-canonical inflammasome by mediating lipopolysaccharide (LPS)-induced pyroptosis. Also indirectly activates the NLRP3 and NLRP6 inflammasomes. Acts as a thiol protease that cleaves a tetrapeptide after an Asp residue at position P1: catalyzes cleavage of CGAS and GSDMD. In contrast to its human ortholog, does not cleave IL18. Effector of the non-canonical inflammasome independently of NLRP3 inflammasome and CASP1: the non-canonical inflammasome promotes pyroptosis through GSDMD cleavage without involving secretion of cytokine IL1B and IL18. In the non-canonical inflammasome, CASP4/CASP11 is activated by direct binding to the lipid A moiety of LPS without the need of an upstream sensor. LPS-binding promotes CASP4/CASP11 activation and CASP4/CASP11-mediated cleavage of GSDMD, followed by pyroptosis of infected cells and their extrusion into the gut lumen. Also indirectly promotes secretion of mature cytokines (IL1A, IL18 and HMGB1) downstream of GSDMD-mediated pyroptosis via activation of the NLRP3 and NLRP6 inflammasomes. Involved in NLRP3-dependent CASP1 activation and IL1B and IL18 secretion in response to non-canonical activators, such as UVB radiation or cholera enterotoxin. Involved in NLRP6 inflammasome-dependent activation in response to lipoteichoic acid (LTA), a cell-wall component of Gram-positive bacteria, which leads to CASP1 activation and IL1B and IL18 secretion. Involved in LPS-induced IL6 secretion; this activity may not require caspase enzymatic activity. The non-canonical inflammasome is required for innate immunity to cytosolic, but not vacuolar, bacteria. Plays a crucial role in the restriction of S.typhimurium replication in colonic epithelial cells during infection. Activation of the non-canonical inflammasome in brain endothelial cells can lead to excessive pyroptosis, leading to blood-brain barrier breakdown. Pyroptosis limits bacterial replication, while cytokine secretion promotes the recruitment and activation of immune cells and triggers mucosal inflammation. May also act as an activator of adaptive immunity in dendritic cells, following activation by oxidized phospholipid 1-palmitoyl-2-arachidonoyl- sn-glycero-3-phosphorylcholine, an oxidized phospholipid (oxPAPC). Cleavage of GSDMD is not strictly dependent on the consensus cleavage site but depends on an exosite interface on CASP4/CASP11 that recognizes and binds the Gasdermin-D, C-terminal (GSDMD-CT) part. In contrast, it does not directly process IL1B. During non-canonical inflammasome activation, cuts CGAS and may play a role in the regulation of antiviral innate immune activation. This chain is Caspase-4, found in Mus musculus (Mouse).